The sequence spans 717 residues: Glutamine--fructose-6-phosphate aminotransferase [isomerizing] (717 aa).

Catalysis depends on cysteine 2, which acts as the For GATase activity. The region spanning 2–318 (CGIFGYCNYL…DDDLAHIYDG (317 aa)) is the Glutamine amidotransferase type-2 domain. Serine 253 carries the post-translational modification Phosphoserine. The residue at position 334 (threonine 334) is a Phosphothreonine. Serine 336 carries the phosphoserine modification. 2 consecutive SIS domains span residues 390–529 (WLPV…DRVS) and 562–707 (CATE…VDFP).

The catalysed reaction is D-fructose 6-phosphate + L-glutamine = D-glucosamine 6-phosphate + L-glutamate. It functions in the pathway nucleotide-sugar biosynthesis; UDP-N-acetyl-alpha-D-glucosamine biosynthesis; alpha-D-glucosamine 6-phosphate from D-fructose 6-phosphate: step 1/1. In terms of biological role, involved in amino sugar synthesis (formation of chitin, supplies the amino sugars of asparagine-linked oligosaccharides of glycoproteins). The polypeptide is Glutamine--fructose-6-phosphate aminotransferase [isomerizing] (GFA1) (Saccharomyces cerevisiae (strain ATCC 204508 / S288c) (Baker's yeast)).